A 485-amino-acid chain; its full sequence is UDP-N-acetylmuramate--L-alanine ligase (485 aa).

120–126 (GSHGKTT) contacts ATP.

Belongs to the MurCDEF family.

The protein localises to the cytoplasm. It catalyses the reaction UDP-N-acetyl-alpha-D-muramate + L-alanine + ATP = UDP-N-acetyl-alpha-D-muramoyl-L-alanine + ADP + phosphate + H(+). It participates in cell wall biogenesis; peptidoglycan biosynthesis. In terms of biological role, cell wall formation. The polypeptide is UDP-N-acetylmuramate--L-alanine ligase (Rickettsia rickettsii (strain Iowa)).